Here is a 156-residue protein sequence, read N- to C-terminus: Small ribosomal subunit protein uS7 (156 aa).

The protein belongs to the universal ribosomal protein uS7 family. Part of the 30S ribosomal subunit. Contacts proteins S9 and S11.

Functionally, one of the primary rRNA binding proteins, it binds directly to 16S rRNA where it nucleates assembly of the head domain of the 30S subunit. Is located at the subunit interface close to the decoding center, probably blocks exit of the E-site tRNA. In Nitrobacter winogradskyi (strain ATCC 25391 / DSM 10237 / CIP 104748 / NCIMB 11846 / Nb-255), this protein is Small ribosomal subunit protein uS7.